Reading from the N-terminus, the 77-residue chain is Ubiquitin-like protein NEDD8 (77 aa).

Positions 70-72 are interaction with uba-3; the sequence is VLA. Glycine 76 participates in a covalent cross-link: Glycyl lysine isopeptide (Gly-Lys) (interchain with K-? in acceptor proteins). Residue phenylalanine 77 is a propeptide.

It belongs to the ubiquitin family. Interacts with dcn-1. Covalently attached to cullins. May interact with atx-3. Cleavage of precursor form is necessary for function.

It is found in the nucleus. Its subcellular location is the cytoplasm. Functionally, ubiquitin-like protein which plays an important role in cell cycle control and embryogenesis. Covalent attachment to its substrates requires prior activation by the E1 complex uba-3-ula-1 and linkage to the E2 enzyme ubc-12. Attachment of ned-8 to cullins activates their associated E3 ubiquitin ligase activity, and thus promotes polyubiquitination and proteasomal degradation of cyclins and other regulatory proteins. This chain is Ubiquitin-like protein NEDD8 (ned-8), found in Caenorhabditis elegans.